The sequence spans 328 residues: Glycerophosphodiester phosphodiesterase GDPD4 (328 aa).

Residues 35–55 form a helical membrane-spanning segment; sequence TILFAVIFLAIFPPLYFHFKL. Residues 73 to 312 form the GP-PDE domain; that stretch reads PLVCAHGGDS…SDPSMFQGLM (240 aa).

The protein belongs to the glycerophosphoryl diester phosphodiesterase family. Expressed in rosette and cauline leaves.

It is found in the membrane. The catalysed reaction is a sn-glycero-3-phosphodiester + H2O = an alcohol + sn-glycerol 3-phosphate + H(+). The protein is Glycerophosphodiester phosphodiesterase GDPD4 of Arabidopsis thaliana (Mouse-ear cress).